We begin with the raw amino-acid sequence, 274 residues long: MQFSKMHGLGNDFVVVDAVTQNIYFPTEVIKRLADRNRGIGFDQLLVVEPPYDPDLDFHYRIFNADGSEVSQCGNGARCFARFVVLKGLTNKKEIAVSTAKGKMMLCVKDDDMVCVNMGEPIWEPNKIPFNANKFEKNYIIRTDIQTLLCGVVSMGNPHCVTQVEDIQHANIEILGPLLESHERFPERVNAGFMQIINRNHIKLRVYERGAGETQACGSGACAAVAVGIMQGVLGSCVQVDLPGGRLMIEWQGKGHPLYMTGEATHIYDGVIRL.

Positions 11, 44, and 64 each coordinate substrate. Catalysis depends on Cys-73, which acts as the Proton donor. Substrate contacts are provided by residues 74–75 (GN), Asn-157, Asn-190, and 208–209 (ER). The active-site Proton acceptor is the Cys-217. 218–219 (GS) serves as a coordination point for substrate.

It belongs to the diaminopimelate epimerase family. As to quaternary structure, homodimer.

Its subcellular location is the cytoplasm. It carries out the reaction (2S,6S)-2,6-diaminopimelate = meso-2,6-diaminopimelate. The protein operates within amino-acid biosynthesis; L-lysine biosynthesis via DAP pathway; DL-2,6-diaminopimelate from LL-2,6-diaminopimelate: step 1/1. Its function is as follows. Catalyzes the stereoinversion of LL-2,6-diaminopimelate (L,L-DAP) to meso-diaminopimelate (meso-DAP), a precursor of L-lysine and an essential component of the bacterial peptidoglycan. The protein is Diaminopimelate epimerase of Histophilus somni (strain 2336) (Haemophilus somnus).